We begin with the raw amino-acid sequence, 721 residues long: MGAFRWLSIAAAASTALALTPEQLITAPRRSEAIPDPSGKVAVFSTSQYSFETHKRTSWWSLLDLKTGQTKVLTNDSSVSEIVWLSDDSILYVNSTNADIPGGVELWVTQASSFAKGYKAASLPASFSGLKAAKTKSGDIRFVAYGQSYPNGTAYNEELATAPLSSARIYDSIYVRHWDYWLSTTFNAVFSGTLKKGHGKNGYSLDGELKNLVSPVKNAESPYPPFGGASDYDLSPDGKWVAFKSKAPELPKANFTTSYIYLVPHDASETARPINGPDSPGTPKGIKGDSSSPVFSPNGDKLAYFQMRDETYESDRRVLYVYSLGSKKTIPSVAGDWDRSPDSVKWTPDGKTLIVGSEDLGRTRLFSLPANAKDDYKPKNFTDGGSVSAYYFLPDSSLLVTGSALWTNWNVYTAKPEKGVIKKIASANEIDPELKGLGPSDISEFYFQGNFTDIHAWVIYPENFDKSKKYPLIFFIHGGPQGNWADGWSTRWNPKAWADQGYVVVAPNPTGSTGFGQALTDAIQNNWGGAPYDDLVKCWEYVHENLDYVDTDHGVAAGASYGGFMINWIQGSPLGRKFKALVSHDGTFVADAKVSTEELWFMQREFNGTFWDARDNYRRWDPSAPERILQFATPMLVIHSDKDYRLPVAEGLSLFNVLQERGVPSRFLNFPDENHWVVNPENSLVWHQQALGWINKYSGVEKSNPNAVSLEDTVVPVVNYN.

An N-terminal signal peptide occupies residues 1–18; the sequence is MGAFRWLSIAAAASTALA. 4 N-linked (GlcNAc...) asparagine glycosylation sites follow: Asn75, Asn94, Asn151, and Asn254. Positions 271 to 297 are disordered; it reads ARPINGPDSPGTPKGIKGDSSSPVFSP. N-linked (GlcNAc...) asparagine glycosylation is found at Asn380 and Asn450. Ser560 (charge relay system) is an active-site residue. Asn607 is a glycosylation site (N-linked (GlcNAc...) asparagine). Active-site charge relay system residues include Asp643 and His675.

Belongs to the peptidase S9C family. In terms of processing, N-glycosylated. As to expression, expressed in mycelia and conidia.

The protein resides in the secreted. May be involved in metabolism of dipeptides or may affect host defense mechanisms. Has a substrate specificity limited to the hydrolysis of X-Ala, His-Ser, and Ser-Tyr dipeptides at a neutral pH optimum. The protein is Dipeptidyl-peptidase 5 of Aspergillus fumigatus (strain CBS 144.89 / FGSC A1163 / CEA10) (Neosartorya fumigata).